Here is a 290-residue protein sequence, read N- to C-terminus: Bifunctional protein FolD (290 aa).

Residues 169-171 (GAS), Ile-194, and Ile-235 contribute to the NADP(+) site.

It belongs to the tetrahydrofolate dehydrogenase/cyclohydrolase family. As to quaternary structure, homodimer.

It carries out the reaction (6R)-5,10-methylene-5,6,7,8-tetrahydrofolate + NADP(+) = (6R)-5,10-methenyltetrahydrofolate + NADPH. The catalysed reaction is (6R)-5,10-methenyltetrahydrofolate + H2O = (6R)-10-formyltetrahydrofolate + H(+). It functions in the pathway one-carbon metabolism; tetrahydrofolate interconversion. Catalyzes the oxidation of 5,10-methylenetetrahydrofolate to 5,10-methenyltetrahydrofolate and then the hydrolysis of 5,10-methenyltetrahydrofolate to 10-formyltetrahydrofolate. The protein is Bifunctional protein FolD of Helicobacter pylori (strain J99 / ATCC 700824) (Campylobacter pylori J99).